The primary structure comprises 146 residues: Large ribosomal subunit protein uL15 (146 aa).

The interval 1–51 (MKLHELQPAPGSRKERNRVGRGIGSGNGKTSGKGHKGQNARSGGGVRIGFE) is disordered. Gly residues-rich tracts occupy residues 21–31 (RGIGSGNGKTS) and 42–51 (SGGGVRIGFE).

Belongs to the universal ribosomal protein uL15 family. In terms of assembly, part of the 50S ribosomal subunit.

Functionally, binds to the 23S rRNA. The protein is Large ribosomal subunit protein uL15 of Anoxybacillus flavithermus (strain DSM 21510 / WK1).